The sequence spans 198 residues: Glutamyl-tRNA(Gln) amidotransferase subunit C, mitochondrial (198 aa).

It belongs to the GatC family. As to quaternary structure, subunit of the heterotrimeric GatCAB amidotransferase (AdT) complex, composed of A, B and C subunits.

It localises to the mitochondrion. The enzyme catalyses L-glutamyl-tRNA(Gln) + L-glutamine + ATP + H2O = L-glutaminyl-tRNA(Gln) + L-glutamate + ADP + phosphate + H(+). Allows the formation of correctly charged Gln-tRNA(Gln) through the transamidation of misacylated Glu-tRNA(Gln) in the mitochondria. The reaction takes place in the presence of glutamine and ATP through an activated gamma-phospho-Glu-tRNA(Gln). This chain is Glutamyl-tRNA(Gln) amidotransferase subunit C, mitochondrial, found in Caenorhabditis remanei (Caenorhabditis vulgaris).